A 493-amino-acid polypeptide reads, in one-letter code: Cobyric acid synthase (493 aa).

The 190-residue stretch at 252 to 441 folds into the GATase cobBQ-type domain; sequence DLKITVIRLP…LHGLLENGPW (190 aa). C333 serves as the catalytic Nucleophile. H433 is a catalytic residue.

The protein belongs to the CobB/CobQ family. CobQ subfamily.

It functions in the pathway cofactor biosynthesis; adenosylcobalamin biosynthesis. In terms of biological role, catalyzes amidations at positions B, D, E, and G on adenosylcobyrinic A,C-diamide. NH(2) groups are provided by glutamine, and one molecule of ATP is hydrogenolyzed for each amidation. The protein is Cobyric acid synthase of Thermosynechococcus vestitus (strain NIES-2133 / IAM M-273 / BP-1).